Consider the following 238-residue polypeptide: Sugar fermentation stimulation protein homolog (238 aa).

This sequence belongs to the SfsA family.

This chain is Sugar fermentation stimulation protein homolog, found in Alkalilimnicola ehrlichii (strain ATCC BAA-1101 / DSM 17681 / MLHE-1).